The chain runs to 263 residues: Indole-3-glycerol phosphate synthase (263 aa).

The protein belongs to the TrpC family.

It catalyses the reaction 1-(2-carboxyphenylamino)-1-deoxy-D-ribulose 5-phosphate + H(+) = (1S,2R)-1-C-(indol-3-yl)glycerol 3-phosphate + CO2 + H2O. The protein operates within amino-acid biosynthesis; L-tryptophan biosynthesis; L-tryptophan from chorismate: step 4/5. The protein is Indole-3-glycerol phosphate synthase of Rhodospirillum rubrum (strain ATCC 11170 / ATH 1.1.1 / DSM 467 / LMG 4362 / NCIMB 8255 / S1).